A 321-amino-acid chain; its full sequence is XylDLEGF operon transcriptional activator 1 (321 aa).

In terms of domain architecture, HTH araC/xylS-type spans 214-315 (ERVVQFIEEN…GELPSDTLRQ (102 aa)). DNA-binding regions (H-T-H motif) lie at residues 231–252 (ERLA…EKHA) and 282–305 (ITEI…RSAF).

The protein resides in the cytoplasm. Regulatory protein of the TOL plasmid xyl operons. XylS activates the xylXYZLTEGFJQKIH operon required for the degradation of toluene, m-xylene and p-xylene. This is XylDLEGF operon transcriptional activator 1 (xylS1) from Pseudomonas putida (Arthrobacter siderocapsulatus).